A 349-amino-acid polypeptide reads, in one-letter code: Phosphoribosylformylglycinamidine cyclo-ligase (349 aa).

The protein belongs to the AIR synthase family.

The protein resides in the cytoplasm. The enzyme catalyses 2-formamido-N(1)-(5-O-phospho-beta-D-ribosyl)acetamidine + ATP = 5-amino-1-(5-phospho-beta-D-ribosyl)imidazole + ADP + phosphate + H(+). The protein operates within purine metabolism; IMP biosynthesis via de novo pathway; 5-amino-1-(5-phospho-D-ribosyl)imidazole from N(2)-formyl-N(1)-(5-phospho-D-ribosyl)glycinamide: step 2/2. The sequence is that of Phosphoribosylformylglycinamidine cyclo-ligase from Lactobacillus delbrueckii subsp. bulgaricus (strain ATCC 11842 / DSM 20081 / BCRC 10696 / JCM 1002 / NBRC 13953 / NCIMB 11778 / NCTC 12712 / WDCM 00102 / Lb 14).